We begin with the raw amino-acid sequence, 99 residues long: Class II hydrophobin 2 (99 aa).

Positions 1 to 15 (MKFFVVAALFAGALA) are cleaved as a signal peptide. Intrachain disulfides connect Cys30–Cys79 and Cys40–Cys70.

This sequence belongs to the cerato-ulmin hydrophobin family. In terms of assembly, homotetramer. Further self-assembles to form highly ordered films at water-air interfaces through intermolecular interactions.

The protein localises to the secreted. It is found in the cell wall. In terms of biological role, aerial growth, conidiation, and dispersal of filamentous fungi in the environment rely upon a capability of their secreting small amphipathic proteins called hydrophobins (HPBs) with low sequence identity. Class I can self-assemble into an outermost layer of rodlet bundles on aerial cell surfaces, conferring cellular hydrophobicity that supports fungal growth, development and dispersal; whereas Class II form highly ordered films at water-air interfaces through intermolecular interactions but contribute nothing to the rodlet structure. HYD2 is a class II hydrophobin that contributes to the fruiting body development. The protein is Class II hydrophobin 2 of Cordyceps militaris (Caterpillar fungus).